The chain runs to 123 residues: Methicillin resistance regulatory protein MecI (123 aa).

The segment at residues 7 to 71 (EISSAEWEVM…KDNKIFQYYS (65 aa)) is a DNA-binding region (H-T-H motif). Residues 74-123 (EESDIKYKTSKNFINKVYKGGFNSLVLNFVEKEDLSQDEIEELRNILNKK) are important for dimerization.

The protein belongs to the BlaI transcriptional regulatory family. Monomer and homodimer. Post-translationally, upon exposure to beta-lactams, proteolytic cleavage at a single site impairs dimerization and abolishes repressor activity.

The protein resides in the cytoplasm. Its function is as follows. Transcriptional repressor that constitutively blocks the transcription of the gene for the penicillin-binding protein MecA. Binds palindromic DNA with the sequence 5'-TACA-[AT]-N-TGTA-3'. Regulates genes involved in antibiotic resistance. Binds DNA as a dimer. This is Methicillin resistance regulatory protein MecI (mecI) from Staphylococcus aureus (strain N315).